A 934-amino-acid polypeptide reads, in one-letter code: Bifunctional uridylyltransferase/uridylyl-removing enzyme (934 aa).

Positions 1–379 (MSAHDLKLEE…TFSRRKRKLS (379 aa)) are uridylyltransferase. Positions 380 to 736 (DDGAFISENH…AKPHAFEAVT (357 aa)) are uridylyl-removing. An HD domain is found at 496-613 (VDEHLLRCIA…IDFADTVQTM (118 aa)). 2 consecutive ACT domains span residues 737 to 818 (EITV…DMLA) and 848 to 931 (VIEV…RSPQ).

The protein belongs to the GlnD family. Mg(2+) serves as cofactor.

The catalysed reaction is [protein-PII]-L-tyrosine + UTP = [protein-PII]-uridylyl-L-tyrosine + diphosphate. It catalyses the reaction [protein-PII]-uridylyl-L-tyrosine + H2O = [protein-PII]-L-tyrosine + UMP + H(+). Its activity is regulated as follows. Uridylyltransferase (UTase) activity is inhibited by glutamine, while glutamine activates uridylyl-removing (UR) activity. Its function is as follows. Modifies, by uridylylation and deuridylylation, the PII regulatory proteins (GlnB and homologs), in response to the nitrogen status of the cell that GlnD senses through the glutamine level. Under low glutamine levels, catalyzes the conversion of the PII proteins and UTP to PII-UMP and PPi, while under higher glutamine levels, GlnD hydrolyzes PII-UMP to PII and UMP (deuridylylation). Thus, controls uridylylation state and activity of the PII proteins, and plays an important role in the regulation of nitrogen assimilation and metabolism. This Brucella suis (strain ATCC 23445 / NCTC 10510) protein is Bifunctional uridylyltransferase/uridylyl-removing enzyme.